The sequence spans 195 residues: Transmembrane protein 239 (195 aa).

Helical transmembrane passes span 105–125 (LWGLEGILYLLLALMLCHALF) and 145–171 (HLLPALLLLVLSALPALLFTASFLLLF).

Its subcellular location is the membrane. The chain is Transmembrane protein 239 (TMEM239) from Homo sapiens (Human).